Reading from the N-terminus, the 209-residue chain is Orotate phosphoribosyltransferase (209 aa).

Residues Arg-96, Lys-100, His-102, and 122 to 130 (EDLISTGGS) contribute to the 5-phospho-alpha-D-ribose 1-diphosphate site. Residue Ser-126 coordinates orotate.

Belongs to the purine/pyrimidine phosphoribosyltransferase family. PyrE subfamily. In terms of assembly, homodimer. The cofactor is Mg(2+).

It carries out the reaction orotidine 5'-phosphate + diphosphate = orotate + 5-phospho-alpha-D-ribose 1-diphosphate. It participates in pyrimidine metabolism; UMP biosynthesis via de novo pathway; UMP from orotate: step 1/2. Its function is as follows. Catalyzes the transfer of a ribosyl phosphate group from 5-phosphoribose 1-diphosphate to orotate, leading to the formation of orotidine monophosphate (OMP). The chain is Orotate phosphoribosyltransferase from Streptococcus gordonii (strain Challis / ATCC 35105 / BCRC 15272 / CH1 / DL1 / V288).